The sequence spans 431 residues: Tol-Pal system protein TolB (431 aa).

The signal sequence occupies residues 1 to 26 (MSLMTKLGFRALVASCLITAGSAANA). A disordered region spans residues 406–431 (DGSAPPQILSVQGGSVREPSWGPFMQ).

It belongs to the TolB family. As to quaternary structure, the Tol-Pal system is composed of five core proteins: the inner membrane proteins TolA, TolQ and TolR, the periplasmic protein TolB and the outer membrane protein Pal. They form a network linking the inner and outer membranes and the peptidoglycan layer.

Its subcellular location is the periplasm. Its function is as follows. Part of the Tol-Pal system, which plays a role in outer membrane invagination during cell division and is important for maintaining outer membrane integrity. The polypeptide is Tol-Pal system protein TolB (Burkholderia orbicola (strain MC0-3)).